The sequence spans 1006 residues: Probable beta-galactosidase A (1006 aa).

The N-terminal stretch at 1-18 (MKLLSVCAIALLAAQAAG) is a signal peptide. Residues Tyr96, Asn140, Ala141, and Glu142 each contribute to the substrate site. The N-linked (GlcNAc...) asparagine glycan is linked to Asn156. Asn199 is a binding site for substrate. The active-site Proton donor is the Glu200. Cys205 and Cys206 are oxidised to a cystine. Tyr260 lines the substrate pocket. A disulfide bridge connects residues Cys266 and Cys315. Glu298 functions as the Nucleophile in the catalytic mechanism. Tyr364 contributes to the substrate binding site. Residues Asn373, Asn402, Asn422, Asn622, Asn760, Asn777, and Asn914 are each glycosylated (N-linked (GlcNAc...) asparagine).

The protein belongs to the glycosyl hydrolase 35 family.

Its subcellular location is the secreted. The enzyme catalyses Hydrolysis of terminal non-reducing beta-D-galactose residues in beta-D-galactosides.. Its function is as follows. Cleaves beta-linked terminal galactosyl residues from gangliosides, glycoproteins, and glycosaminoglycans. The chain is Probable beta-galactosidase A (lacA) from Aspergillus fumigatus (strain ATCC MYA-4609 / CBS 101355 / FGSC A1100 / Af293) (Neosartorya fumigata).